The following is a 522-amino-acid chain: Circadian clock oscillator protein KaiC (522 aa).

KaiC domains are found at residues 1 to 248 (MKKS…INIF) and 262 to 522 (ARVS…DDLL). Glycine 50, threonine 51, glycine 52, lysine 53, threonine 54, serine 90, lysine 225, leucine 226, arginine 227, threonine 229, histidine 231, threonine 241, aspartate 242, threonine 291, glycine 292, threonine 293, glycine 294, lysine 295, threonine 296, and leucine 297 together coordinate ATP. Threonine 54 contributes to the Mg(2+) binding site. Position 296 (threonine 296) interacts with Mg(2+). Mg(2+) is bound at residue glutamate 319. Tryptophan 332 lines the ATP pocket. Residue serine 432 is modified to Phosphoserine; by autocatalysis. Threonine 433 is modified (phosphothreonine; by autocatalysis). Residues arginine 452, lysine 458, methionine 459, arginine 460, serine 462, histidine 464, and lysine 466 each coordinate ATP.

The protein belongs to the KaiC family. In terms of assembly, homohexamer; hexamerization is dependent on ATP-binding. The KaiABC complex composition changes during the circadian cycle to control KaiC phosphorylation. Complexes KaiC(6), KaiA(2-4):KaiC(6), KaiB(6):KaiC(6) and KaiC(6):KaiB(6):KaiA(12) are among the most important forms, many form cooperatively. KaiC interacts with SasA, activating its autokinase function and leading to RpaA activation. Requires Mg(2+) as cofactor. Post-translationally, phosphorylated on serine and threonine residues by autocatalysis. Has a 4 step phosphorylation cycle; the autokinase acts first on Thr-433, then Ser-432. When Ser-432 is modified KaiC switches to an autophosphatase mode, acting first on phospho-Thr-433 then phospho-Ser-432.

The catalysed reaction is L-seryl-[protein] + ATP = O-phospho-L-seryl-[protein] + ADP + H(+). The enzyme catalyses L-threonyl-[protein] + ATP = O-phospho-L-threonyl-[protein] + ADP + H(+). It carries out the reaction ATP + H2O = ADP + phosphate + H(+). Its activity is regulated as follows. The interaction with KaiA enhances its phosphorylation status, while the interaction with KaiB decreases it. In terms of biological role, central component of the KaiABC oscillator complex, which constitutes the main circadian regulator in cyanobacteria. Complex composition changes during the circadian cycle to control KaiC phosphorylation. KaiA stimulates KaiC autophosphorylation, while KaiB sequesters KaiA, leading to KaiC autodephosphorylation. Clock output pathways impact the RpaA transcriptional regulator. KaiC enhances the autophosphorylation activity of SasA, which then transfers its phosphate group to RpaA to activate it. KaiB and KaiC together enhance the phospho-RpaA dephosphatase activity of CikA. Its function is as follows. Has a weak, temperature-independent ATPase activity; ATPase activity defines the circadian period. The phosphorylation state of KaiC modulates its ATPase activity and effects KaiB binding. This chain is Circadian clock oscillator protein KaiC, found in Acaryochloris marina (strain MBIC 11017).